Consider the following 250-residue polypeptide: ATP synthase subunit a (250 aa).

6 helical membrane passes run 27–47 (FTNA…FLTF), 85–105 (FFPL…VGLI), 115–135 (LIVT…YGFV), 141–161 (FLHL…LVVI), 181–201 (MLAG…LASA), and 223–243 (ELLV…IYLN).

This sequence belongs to the ATPase A chain family. F-type ATPases have 2 components, CF(1) - the catalytic core - and CF(0) - the membrane proton channel. CF(1) has five subunits: alpha(3), beta(3), gamma(1), delta(1), epsilon(1). CF(0) has three main subunits: a(1), b(2) and c(9-12). The alpha and beta chains form an alternating ring which encloses part of the gamma chain. CF(1) is attached to CF(0) by a central stalk formed by the gamma and epsilon chains, while a peripheral stalk is formed by the delta and b chains.

The protein resides in the cell inner membrane. Key component of the proton channel; it plays a direct role in the translocation of protons across the membrane. In Xanthobacter autotrophicus (strain ATCC BAA-1158 / Py2), this protein is ATP synthase subunit a.